The chain runs to 431 residues: MVRLEKNDPLMLARQLPIKSVALILAGGRGTRLKDLTIKRAKPAVHFGGKFRIIDFALSNCINSGIRRIGVITQYQSHTLVQHIQRGWSFFSEEMNEFVDLLPAQQRVHGENWYRGTADAVTQNLDIIRRYKAEYVVILAGDHIYKQDYSRMLIDHVEKGARCTVACMPVPIEEASAFGVMAVDENEKIIEFVEKPANPPAMPTDPTKSLASMGIYIFDAAYLYELLEEDDRNENSSHDFGKDIIPKITEAGMAYAHPFPLSCVQSDPNAEPYWRDVGTLEAYWKANLDLASVTPELDMYDQNWPIRTHMESLPPAKFVQDRSGSHGMTLNSLVSGGCIISGSVVVQSVLFPRVRVNSFCNIDSAVLLPDVWVGRSCRLRRCVIDRACVIPEGMVIGENAEEDARRFYRSEEGIVLVTRDMLRKLGHKQER.

Residue Lys-39 participates in beta-D-fructose 1,6-bisphosphate binding. AMP is bound by residues Arg-40, His-46, and Arg-52. Tyr-114 contacts alpha-D-glucose 1-phosphate. Arg-130 is an AMP binding site. Alpha-D-glucose 1-phosphate contacts are provided by residues Gly-179, 194-195 (EK), and Ser-212. Arg-386 contributes to the AMP binding site. Residue 429–431 (QER) participates in beta-D-fructose 1,6-bisphosphate binding.

Belongs to the bacterial/plant glucose-1-phosphate adenylyltransferase family. As to quaternary structure, homotetramer.

The enzyme catalyses alpha-D-glucose 1-phosphate + ATP + H(+) = ADP-alpha-D-glucose + diphosphate. It functions in the pathway glycan biosynthesis; glycogen biosynthesis. Its activity is regulated as follows. Allosterically activated by fructose-1,6-bisphosphate (F16BP) and inhibited by AMP. Involved in the biosynthesis of ADP-glucose, a building block required for the elongation reactions to produce glycogen. Catalyzes the reaction between ATP and alpha-D-glucose 1-phosphate (G1P) to produce pyrophosphate and ADP-Glc. In Klebsiella pneumoniae (strain 342), this protein is Glucose-1-phosphate adenylyltransferase.